Here is a 462-residue protein sequence, read N- to C-terminus: Argininosuccinate lyase 2 (462 aa).

It belongs to the lyase 1 family. Argininosuccinate lyase subfamily.

It localises to the cytoplasm. It carries out the reaction 2-(N(omega)-L-arginino)succinate = fumarate + L-arginine. The protein operates within amino-acid biosynthesis; L-arginine biosynthesis; L-arginine from L-ornithine and carbamoyl phosphate: step 3/3. The polypeptide is Argininosuccinate lyase 2 (Shouchella clausii (strain KSM-K16) (Alkalihalobacillus clausii)).